The sequence spans 313 residues: Ribosomal RNA small subunit methyltransferase H (313 aa).

S-adenosyl-L-methionine is bound by residues 35–37 (GGH), aspartate 55, phenylalanine 79, aspartate 100, and glutamine 107.

The protein belongs to the methyltransferase superfamily. RsmH family.

It localises to the cytoplasm. The enzyme catalyses cytidine(1402) in 16S rRNA + S-adenosyl-L-methionine = N(4)-methylcytidine(1402) in 16S rRNA + S-adenosyl-L-homocysteine + H(+). Specifically methylates the N4 position of cytidine in position 1402 (C1402) of 16S rRNA. The polypeptide is Ribosomal RNA small subunit methyltransferase H (Burkholderia vietnamiensis (strain G4 / LMG 22486) (Burkholderia cepacia (strain R1808))).